Reading from the N-terminus, the 396-residue chain is Septu protein PtuA (396 aa).

Component of antiviral defense system Septu type I, composed of PtuA and PtuB. Expression of Septu type I in B.subtilis (strain BEST7003) confers resistance to phages SBSphiC and SBSphiJ. May be an ATPase. The sequence is that of Septu protein PtuA from Bacillus thuringiensis.